Consider the following 197-residue polypeptide: Imidazoleglycerol-phosphate dehydratase (197 aa).

Belongs to the imidazoleglycerol-phosphate dehydratase family.

The protein localises to the cytoplasm. It carries out the reaction D-erythro-1-(imidazol-4-yl)glycerol 3-phosphate = 3-(imidazol-4-yl)-2-oxopropyl phosphate + H2O. It participates in amino-acid biosynthesis; L-histidine biosynthesis; L-histidine from 5-phospho-alpha-D-ribose 1-diphosphate: step 6/9. In Alkalilimnicola ehrlichii (strain ATCC BAA-1101 / DSM 17681 / MLHE-1), this protein is Imidazoleglycerol-phosphate dehydratase.